The primary structure comprises 207 residues: LexA repressor (207 aa).

A DNA-binding region (H-T-H motif) is located at residues 28-48; that stretch reads VREIGEAVGLASSSTVHGHLA. Residues Ser-129 and Lys-167 each act as for autocatalytic cleavage activity in the active site.

It belongs to the peptidase S24 family. Homodimer.

The enzyme catalyses Hydrolysis of Ala-|-Gly bond in repressor LexA.. Represses a number of genes involved in the response to DNA damage (SOS response), including recA and lexA. In the presence of single-stranded DNA, RecA interacts with LexA causing an autocatalytic cleavage which disrupts the DNA-binding part of LexA, leading to derepression of the SOS regulon and eventually DNA repair. In Geobacillus kaustophilus (strain HTA426), this protein is LexA repressor.